The primary structure comprises 125 residues: Photoactive yellow protein (125 aa).

In terms of domain architecture, PAS spans 23-86 (LDGLAFGAIQ…GKFKEGVASG (64 aa)). Position 69 is an S-(4-hydroxycinnamyl)cysteine (cysteine 69).

The protein belongs to the photoactive yellow protein family. As to quaternary structure, monomer. Post-translationally, the 4-hydroxycinnamic acid (p-coumaric acid) chromophore is covalently bound via a thioester linkage.

Its function is as follows. Photoactive blue light protein. Probably functions as a photoreceptor for a negative phototaxis response. This is Photoactive yellow protein (pyp) from Halorhodospira halophila (Ectothiorhodospira halophila).